A 323-amino-acid polypeptide reads, in one-letter code: 1-aminocyclopropane-1-carboxylate oxidase 4 (323 aa).

N-acetylmethionine is present on M1. The Fe2OG dioxygenase domain occupies 153–254; it reads PTFGTKVSNY…RMSIASFYNP (102 aa). Residues H177, D179, and H234 each contribute to the Fe cation site. R245 provides a ligand contact to 2-oxoglutarate.

Belongs to the iron/ascorbate-dependent oxidoreductase family. The cofactor is Fe cation. Expressed in vegetative tissues. Expressed constitutively at a low level in leaves and blades.

The enzyme catalyses 1-aminocyclopropane-1-carboxylate + L-ascorbate + O2 = ethene + L-dehydroascorbate + hydrogen cyanide + CO2 + 2 H2O. It participates in alkene biosynthesis; ethylene biosynthesis via S-adenosyl-L-methionine; ethylene from S-adenosyl-L-methionine: step 2/2. Functionally, enzyme involved in the ethylene biosynthesis. May promote stem elongation by maximizing the extensibility cells, possibly by activating ethylene biosynthesis, in response to very-long-chain fatty acids (VLCFAs C20:0 to C30:0). The sequence is that of 1-aminocyclopropane-1-carboxylate oxidase 4 (ACO4) from Arabidopsis thaliana (Mouse-ear cress).